The following is a 523-amino-acid chain: Tryptophan 6-halogenase SttH (523 aa).

Glycine 14, serine 40, isoleucine 43, valine 46, valine 48, and alanine 51 together coordinate FAD. The active site involves lysine 79. Proline 97 contacts L-tryptophan. Valine 203 and leucine 354 together coordinate FAD. Residues threonine 365 and glycine 366 each contribute to the chloride site. FAD is bound at residue isoleucine 367. L-tryptophan contacts are provided by tyrosine 456 and tyrosine 457.

It belongs to the flavin-dependent halogenase family. Bacterial tryptophan halogenase subfamily. As to quaternary structure, homodimer.

The catalysed reaction is L-tryptophan + FADH2 + chloride + O2 = 6-chloro-L-tryptophan + FAD + 2 H2O. It carries out the reaction D-tryptophan + FADH2 + chloride + O2 = 6-chloro-D-tryptophan + FAD + 2 H2O. Its function is as follows. Catalyzes the chlorination of tryptophan (Trp) at C6 position to yield 6-chloro-tryptophan. Accepts both L and D-Trp as the substrates. The enzyme also uses bromide to yield 6-bromo-Trp. In vitro, can also catalyze the halogenation of 3-indolepropionic acid, N-methyltryptophan and non-indolic aromatic substrates such as kynurenine, anthranilamide and N-phenylanthranilic acid. This chain is Tryptophan 6-halogenase SttH, found in Streptomyces toxytricini (Actinomyces toxytricini).